The sequence spans 366 residues: Aminomethyltransferase (366 aa).

The protein belongs to the GcvT family. In terms of assembly, the glycine cleavage system is composed of four proteins: P, T, L and H.

The catalysed reaction is N(6)-[(R)-S(8)-aminomethyldihydrolipoyl]-L-lysyl-[protein] + (6S)-5,6,7,8-tetrahydrofolate = N(6)-[(R)-dihydrolipoyl]-L-lysyl-[protein] + (6R)-5,10-methylene-5,6,7,8-tetrahydrofolate + NH4(+). Its function is as follows. The glycine cleavage system catalyzes the degradation of glycine. This chain is Aminomethyltransferase, found in Bacillus cytotoxicus (strain DSM 22905 / CIP 110041 / 391-98 / NVH 391-98).